The sequence spans 154 residues: Transcriptional repressor NrdR (154 aa).

The segment at 3–34 is a zinc-finger region; that stretch reads CPFCGNVDTQVKDSRPAEDNVAIRRRRFCPAC. Residues 49-139 enclose the ATP-cone domain; sequence LVVVKSSGRR…VYKNFQAADD (91 aa).

Belongs to the NrdR family. It depends on Zn(2+) as a cofactor.

Negatively regulates transcription of bacterial ribonucleotide reductase nrd genes and operons by binding to NrdR-boxes. This chain is Transcriptional repressor NrdR, found in Paracoccus denitrificans (strain Pd 1222).